Consider the following 524-residue polypeptide: Peptide chain release factor 3 (524 aa).

Residues Gln9–Leu275 form the tr-type G domain. GTP is bound by residues Ser18 to Thr25, Asp86 to His90, and Asn140 to Asp143.

The protein belongs to the TRAFAC class translation factor GTPase superfamily. Classic translation factor GTPase family. PrfC subfamily.

The protein localises to the cytoplasm. Functionally, increases the formation of ribosomal termination complexes and stimulates activities of RF-1 and RF-2. It binds guanine nucleotides and has strong preference for UGA stop codons. It may interact directly with the ribosome. The stimulation of RF-1 and RF-2 is significantly reduced by GTP and GDP, but not by GMP. The chain is Peptide chain release factor 3 from Methylobacillus flagellatus (strain ATCC 51484 / DSM 6875 / VKM B-1610 / KT).